A 257-amino-acid polypeptide reads, in one-letter code: 4-diphosphocytidyl-2-C-methyl-D-erythritol kinase (257 aa).

Lys-8 is a catalytic residue. Residue 91–101 (PMGGGLGGGSA) coordinates ATP. Residue Asp-131 is part of the active site.

It belongs to the GHMP kinase family. IspE subfamily.

The catalysed reaction is 4-CDP-2-C-methyl-D-erythritol + ATP = 4-CDP-2-C-methyl-D-erythritol 2-phosphate + ADP + H(+). The protein operates within isoprenoid biosynthesis; isopentenyl diphosphate biosynthesis via DXP pathway; isopentenyl diphosphate from 1-deoxy-D-xylulose 5-phosphate: step 3/6. Catalyzes the phosphorylation of the position 2 hydroxy group of 4-diphosphocytidyl-2C-methyl-D-erythritol. This chain is 4-diphosphocytidyl-2-C-methyl-D-erythritol kinase, found in Petrotoga mobilis (strain DSM 10674 / SJ95).